A 650-amino-acid chain; its full sequence is Chaperone protein DnaK (650 aa).

Threonine 200 is modified (phosphothreonine; by autocatalysis).

It belongs to the heat shock protein 70 family.

In terms of biological role, acts as a chaperone. The polypeptide is Chaperone protein DnaK (Burkholderia orbicola (strain MC0-3)).